A 244-amino-acid chain; its full sequence is 1-(5-phosphoribosyl)-5-[(5-phosphoribosylamino)methylideneamino] imidazole-4-carboxamide isomerase (244 aa).

Catalysis depends on Asp15, which acts as the Proton acceptor. The Proton donor role is filled by Asp136.

The protein belongs to the HisA/HisF family.

The protein localises to the cytoplasm. The catalysed reaction is 1-(5-phospho-beta-D-ribosyl)-5-[(5-phospho-beta-D-ribosylamino)methylideneamino]imidazole-4-carboxamide = 5-[(5-phospho-1-deoxy-D-ribulos-1-ylimino)methylamino]-1-(5-phospho-beta-D-ribosyl)imidazole-4-carboxamide. It participates in amino-acid biosynthesis; L-histidine biosynthesis; L-histidine from 5-phospho-alpha-D-ribose 1-diphosphate: step 4/9. The polypeptide is 1-(5-phosphoribosyl)-5-[(5-phosphoribosylamino)methylideneamino] imidazole-4-carboxamide isomerase (Dehalococcoides mccartyi (strain CBDB1)).